Reading from the N-terminus, the 123-residue chain is Fluoride-specific ion channel FluC (123 aa).

The next 4 membrane-spanning stretches (helical) occupy residues 1 to 21 (MQWL…GWLA), 32 to 52 (LGTL…LVWF), 66 to 86 (FVIT…AEVF), and 94 to 114 (LLAA…ATAL). 2 residues coordinate Na(+): Gly73 and Thr76.

Belongs to the fluoride channel Fluc/FEX (TC 1.A.43) family.

The protein resides in the cell inner membrane. It carries out the reaction fluoride(in) = fluoride(out). Its activity is regulated as follows. Na(+) is not transported, but it plays an essential structural role and its presence is essential for fluoride channel function. Its function is as follows. Fluoride-specific ion channel. Important for reducing fluoride concentration in the cell, thus reducing its toxicity. The polypeptide is Fluoride-specific ion channel FluC (Psychrobacter arcticus (strain DSM 17307 / VKM B-2377 / 273-4)).